The following is a 382-amino-acid chain: uncharacterized protein (382 aa).

12 consecutive transmembrane segments (helical) span residues 8-28 (VMLLLCGLLLLTLAIAVLNTL), 45-65 (MVSSSYFTGNLVGTLFTGYLI), 75-95 (YLASLIFAAGCVGLGVMVGFW), 102-122 (FIAGIGCAMIWVVVESALMCS), 131-151 (LLAAYMMVYYMGTFLGQLLVS), 157-177 (LLHVLPWVTGMILAGILPLLF), 204-224 (LGVNGCIISGIVLGSLYGLMP), 231-251 (GMANASIGFWMAVLVSAGILG), 270-290 (VQVFVVILGSIAMLTQAAMAP), 291-311 (ALFILGAAGFTLYPVAMAWAC), 325-345 (ALLLSYTVGSLLGPSFAAMLM), and 349-369 (SDNLLFIMIASVSFIYLLMLL).

Belongs to the major facilitator superfamily. YcaD (TC 2.A.1.26) family.

Its subcellular location is the cell inner membrane. This is an uncharacterized protein from Salmonella paratyphi B (strain ATCC BAA-1250 / SPB7).